A 115-amino-acid polypeptide reads, in one-letter code: Iron-sulfur cluster insertion protein ErpA (115 aa).

Iron-sulfur cluster contacts are provided by Cys-43, Cys-107, and Cys-109.

It belongs to the HesB/IscA family. Homodimer. Requires iron-sulfur cluster as cofactor.

Functionally, required for insertion of 4Fe-4S clusters for at least IspG. In Photorhabdus laumondii subsp. laumondii (strain DSM 15139 / CIP 105565 / TT01) (Photorhabdus luminescens subsp. laumondii), this protein is Iron-sulfur cluster insertion protein ErpA.